We begin with the raw amino-acid sequence, 229 residues long: uncharacterized protein (229 aa).

Residues 2–229 (LTLNNISKSY…LDERGDISHA (228 aa)) enclose the ABC transporter domain. ATP is bound at residue 38-45 (GPSGSGKS).

It belongs to the ABC transporter superfamily.

This is an uncharacterized protein from Bacillus subtilis (strain 168).